Here is a 456-residue protein sequence, read N- to C-terminus: ATP-dependent protease ATPase subunit HslU (456 aa).

Residues isoleucine 18, 60–65 (GVGKTE), aspartate 270, glutamate 334, and arginine 406 each bind ATP.

It belongs to the ClpX chaperone family. HslU subfamily. In terms of assembly, a double ring-shaped homohexamer of HslV is capped on each side by a ring-shaped HslU homohexamer. The assembly of the HslU/HslV complex is dependent on binding of ATP.

The protein resides in the cytoplasm. In terms of biological role, ATPase subunit of a proteasome-like degradation complex; this subunit has chaperone activity. The binding of ATP and its subsequent hydrolysis by HslU are essential for unfolding of protein substrates subsequently hydrolyzed by HslV. HslU recognizes the N-terminal part of its protein substrates and unfolds these before they are guided to HslV for hydrolysis. The sequence is that of ATP-dependent protease ATPase subunit HslU from Exiguobacterium sibiricum (strain DSM 17290 / CCUG 55495 / CIP 109462 / JCM 13490 / 255-15).